The primary structure comprises 280 residues: Pre-mRNA-splicing factor PRP21 (280 aa).

An SURP motif 1 repeat occupies 11–49 (DIKTTVNYIKQHGVEFENKLLEDERFSFIKKDDPLHEYY). The disordered stretch occupies residues 53–72 (MNEPTDTVSGEDNDRKSERE). The SURP motif 2 repeat unit spans residues 95–135 (VIKLTARYYAKDKSIVEQMISKDGEARLNFMNSSHPLHKTF). 2 stretches are compositionally biased toward basic and acidic residues: residues 246-261 (EKIV…GDSK) and 269-280 (AVGETRLKKSKK). Residues 246–280 (EKIVSDQGKQKGGDSKGKKRKIRAVGETRLKKSKK) form a disordered region.

In terms of assembly, belongs to the CWC complex (or CEF1-associated complex), a spliceosome sub-complex reminiscent of a late-stage spliceosome composed of the U2, U5 and U6 snRNAs and at least BUD13, BUD31, BRR2, CDC40, CEF1, CLF1, CUS1, CWC2, CWC15, CWC21, CWC22, CWC23, CWC24, CWC25, CWC27, ECM2, HSH155, IST3, ISY1, LEA1, MSL1, NTC20, PRP8, PRP9, PRP11, PRP19, PRP21, PRP22, PRP45, PRP46, SLU7, SMB1, SMD1, SMD2, SMD3, SMX2, SMX3, SNT309, SNU114, SPP2, SYF1, SYF2, RSE1 and YJU2.

It is found in the nucleus. MRNA splicing factors, PRP9, PRP11, and PRP21, are necessary for binding of the U2 snRNP to the pre-mRNA in an early step of spliceosome assembly. The chain is Pre-mRNA-splicing factor PRP21 (PRP21) from Saccharomyces cerevisiae (strain ATCC 204508 / S288c) (Baker's yeast).